Reading from the N-terminus, the 149-residue chain is Nucleoside diphosphate kinase (149 aa).

ATP is bound by residues Lys-11, Phe-59, Arg-87, Thr-93, Arg-104, and Asn-114. The active-site Pros-phosphohistidine intermediate is the His-117.

The protein belongs to the NDK family. Homotetramer. The cofactor is Mg(2+).

The protein resides in the cytoplasm. The catalysed reaction is a 2'-deoxyribonucleoside 5'-diphosphate + ATP = a 2'-deoxyribonucleoside 5'-triphosphate + ADP. It carries out the reaction a ribonucleoside 5'-diphosphate + ATP = a ribonucleoside 5'-triphosphate + ADP. Its function is as follows. Major role in the synthesis of nucleoside triphosphates other than ATP. The ATP gamma phosphate is transferred to the NDP beta phosphate via a ping-pong mechanism, using a phosphorylated active-site intermediate. In Treponema pallidum (strain Nichols), this protein is Nucleoside diphosphate kinase.